The sequence spans 276 residues: Bis(5'-nucleosyl)-tetraphosphatase, symmetrical (276 aa).

The protein belongs to the Ap4A hydrolase family.

The catalysed reaction is P(1),P(4)-bis(5'-adenosyl) tetraphosphate + H2O = 2 ADP + 2 H(+). In terms of biological role, hydrolyzes diadenosine 5',5'''-P1,P4-tetraphosphate to yield ADP. The protein is Bis(5'-nucleosyl)-tetraphosphatase, symmetrical of Neisseria gonorrhoeae (strain ATCC 700825 / FA 1090).